A 503-amino-acid chain; its full sequence is WD repeat-containing protein 55 homolog (503 aa).

Disordered regions lie at residues 1-21 (MHTH…DLDD) and 35-132 (ALVG…DDLD). Acidic residues-rich tracts occupy residues 12–21 (DADELDDLDD), 40–50 (DVSDSDIDEHD), and 78–96 (NAED…DEAE). WD repeat units follow at residues 157–196 (KLED…NKLL), 201–242 (VHSK…KLYE), 244–282 (AHDD…PIFE), 285–324 (EVED…LYVQ), 327–366 (PYEE…YHCD), and 411–450 (QHNM…DFGD). The disordered stretch occupies residues 483 to 503 (TKEDEDNADNNDAAAGPSNSA).

It belongs to the WD repeat WDR55 family.

This chain is WD repeat-containing protein 55 homolog, found in Drosophila persimilis (Fruit fly).